Reading from the N-terminus, the 210-residue chain is MSGKGTSSRAYDMIMKLLLVGDSGVGKSCLLLRFVEDKFNPSFITTIGIDFKIRTIESKGKRIKLQVWDTAGQERFRTITTAYYRGAMGIVLIYDVTDSRSFENVENWFQTVTQHANEDAQIFLVGNKCDDEVNRQVSKEQGQELAAKLNVPFLEASAKSNENVDSIFYELASIIQEKHVEENIGGVGGASGAGGIDVSQNNSGAKNNCC.

Residue 21–28 (GDSGVGKS) participates in GTP binding. Residues 43-51 (FITTIGIDF) carry the Effector region motif. GTP-binding positions include 69 to 73 (DTAGQ) and 127 to 130 (NKCD). S-geranylgeranyl cysteine attachment occurs at residues cysteine 209 and cysteine 210.

Belongs to the small GTPase superfamily. Rab family.

It is found in the cytoplasmic vesicle. The protein localises to the secretory vesicle membrane. It localises to the cell membrane. Its function is as follows. Involved in exocytosis. Maybe by regulating the binding and fusion of secretory vesicles with the cell surface. The GTP-bound form of SEC4 may interact with an effector, thereby stimulating its activity and leading to exocytotic fusion. SEC4 may be an upstream activator of the 19.5S SEC8/SEC15 particle. SEC4 probably interacts directly with SEC8; it could serve as the attachment site for the SEC8/SEC15 particle. In Candida albicans (strain SC5314 / ATCC MYA-2876) (Yeast), this protein is Ras-related protein SEC4 (SEC4).